The primary structure comprises 729 residues: Fatty acid oxidation complex subunit alpha (729 aa).

The enoyl-CoA hydratase/isomerase stretch occupies residues Met1 to Lys189. Asp296 contacts substrate. Residues Glu311 to Ala729 are 3-hydroxyacyl-CoA dehydrogenase. Residues Met324, Asp343, Val400–Glu402, Lys407, and Ser429 each bind NAD(+). His450 serves as the catalytic For 3-hydroxyacyl-CoA dehydrogenase activity. Asn453 contacts NAD(+). Residues Asn500 and Tyr660 each contribute to the substrate site. Residues Arg708–Ala729 are disordered.

This sequence in the N-terminal section; belongs to the enoyl-CoA hydratase/isomerase family. In the C-terminal section; belongs to the 3-hydroxyacyl-CoA dehydrogenase family. As to quaternary structure, heterotetramer of two alpha chains (FadB) and two beta chains (FadA).

The catalysed reaction is a (3S)-3-hydroxyacyl-CoA + NAD(+) = a 3-oxoacyl-CoA + NADH + H(+). It carries out the reaction a (3S)-3-hydroxyacyl-CoA = a (2E)-enoyl-CoA + H2O. It catalyses the reaction a 4-saturated-(3S)-3-hydroxyacyl-CoA = a (3E)-enoyl-CoA + H2O. The enzyme catalyses (3S)-3-hydroxybutanoyl-CoA = (3R)-3-hydroxybutanoyl-CoA. The catalysed reaction is a (3Z)-enoyl-CoA = a 4-saturated (2E)-enoyl-CoA. It carries out the reaction a (3E)-enoyl-CoA = a 4-saturated (2E)-enoyl-CoA. The protein operates within lipid metabolism; fatty acid beta-oxidation. In terms of biological role, involved in the aerobic and anaerobic degradation of long-chain fatty acids via beta-oxidation cycle. Catalyzes the formation of 3-oxoacyl-CoA from enoyl-CoA via L-3-hydroxyacyl-CoA. It can also use D-3-hydroxyacyl-CoA and cis-3-enoyl-CoA as substrate. The sequence is that of Fatty acid oxidation complex subunit alpha from Salmonella newport (strain SL254).